Reading from the N-terminus, the 877-residue chain is DNA mismatch repair protein MutS (877 aa).

An ATP-binding site is contributed by 627–634 (GPNMAGKS).

Belongs to the DNA mismatch repair MutS family.

Functionally, this protein is involved in the repair of mismatches in DNA. It is possible that it carries out the mismatch recognition step. This protein has a weak ATPase activity. The protein is DNA mismatch repair protein MutS of Dinoroseobacter shibae (strain DSM 16493 / NCIMB 14021 / DFL 12).